Consider the following 433-residue polypeptide: Probable M18 family aminopeptidase 2 (433 aa).

Zn(2+) contacts are provided by histidine 79, histidine 153, and histidine 404.

It belongs to the peptidase M18 family. Requires Zn(2+) as cofactor.

In Mycobacterium bovis (strain ATCC BAA-935 / AF2122/97), this protein is Probable M18 family aminopeptidase 2 (apeB).